The following is a 148-amino-acid chain: Lysozyme C (148 aa).

Positions 1–18 (MKAVIILGLVLLSVTVQG) are cleaved as a signal peptide. A C-type lysozyme domain is found at 19–148 (KIFERCELAR…VSQYVQGCGV (130 aa)). 4 disulfides stabilise this stretch: Cys-24–Cys-146, Cys-48–Cys-134, Cys-83–Cys-99, and Cys-95–Cys-113. Residues Glu-53 and Asp-71 contribute to the active site.

This sequence belongs to the glycosyl hydrolase 22 family. In terms of assembly, monomer.

It is found in the secreted. The enzyme catalyses Hydrolysis of (1-&gt;4)-beta-linkages between N-acetylmuramic acid and N-acetyl-D-glucosamine residues in a peptidoglycan and between N-acetyl-D-glucosamine residues in chitodextrins.. Lysozymes have primarily a bacteriolytic function; those in tissues and body fluids are associated with the monocyte-macrophage system and enhance the activity of immunoagents. The polypeptide is Lysozyme C (LYZ) (Macaca mulatta (Rhesus macaque)).